The primary structure comprises 831 residues: Probable glucan 1,3-beta-glucosidase D (831 aa).

6 stretches are compositionally biased toward basic and acidic residues: residues 1–24, 44–56, 79–93, 102–115, 137–151, and 198–213; these read MPSHSRSRDRYRGERDPSRRYREV, RRDDYQHDIRSHE, RSHDVEGRRRERSRA, SRRDRNRGGEEYRR, RDGQRARPRDMDREA, and QRERSQEQEQPRLESK. Disordered regions lie at residues 1-179 and 192-241; these read MPSH…SGSH and HYDE…GQSK. At 1–297 the chain is on the cytoplasmic side; it reads MPSHSRSRDR…AQPPFWKRKK (297 aa). A helical; Signal-anchor for type II membrane protein transmembrane segment spans residues 298 to 318; that stretch reads WWIVIGVLVVVLAIVIPVAVV. The Extracellular segment spans residues 319 to 831; the sequence is MSKKHGHDDD…PSFGDLPEYY (513 aa). Residues Asn376, Asn381, Asn393, Asn410, Asn442, Asn546, and Asn558 are each glycosylated (N-linked (GlcNAc...) asparagine). Glu597 acts as the Proton donor in catalysis. Asn610, Asn636, Asn669, and Asn689 each carry an N-linked (GlcNAc...) asparagine glycan. Glu702 serves as the catalytic Nucleophile.

This sequence belongs to the glycosyl hydrolase 5 (cellulase A) family.

The protein resides in the cell membrane. It catalyses the reaction Successive hydrolysis of beta-D-glucose units from the non-reducing ends of (1-&gt;3)-beta-D-glucans, releasing alpha-glucose.. Glucosidase involved in the degradation of cellulosic biomass. Active on lichenan. This is Probable glucan 1,3-beta-glucosidase D (exgD) from Aspergillus flavus (strain ATCC 200026 / FGSC A1120 / IAM 13836 / NRRL 3357 / JCM 12722 / SRRC 167).